Consider the following 439-residue polypeptide: Serine/threonine-protein kinase 2 (439 aa).

Residues 87–439 (NDDFYHISTG…IFSDWINGGN (353 aa)) enclose the Protein kinase domain. ATP contacts are provided by residues 93-101 (ISTGGYGIV) and Lys-117. Catalysis depends on Asp-307, which acts as the Proton acceptor.

Belongs to the protein kinase superfamily. Ser/Thr protein kinase family. Post-translationally, phosphorylated in vivo. Autophosphorylated in vitro.

Its subcellular location is the host endoplasmic reticulum. It is found in the host endoplasmic reticulum-Golgi intermediate compartment. The catalysed reaction is L-seryl-[protein] + ATP = O-phospho-L-seryl-[protein] + ADP + H(+). It catalyses the reaction L-threonyl-[protein] + ATP = O-phospho-L-threonyl-[protein] + ADP + H(+). Its function is as follows. Essential serine-protein kinase involved in the early stage of virion morphogenesis. The polypeptide is Serine/threonine-protein kinase 2 (OPG054) (Bos taurus (Bovine)).